Here is a 657-residue protein sequence, read N- to C-terminus: 1-deoxy-D-xylulose-5-phosphate synthase (657 aa).

Position 73 (His-73) interacts with thiamine diphosphate. The tract at residues 91 to 110 is disordered; sequence RQEGGMSGYPDRGESEHDIV. The span at 101 to 110 shows a compositional bias: basic and acidic residues; sequence DRGESEHDIV. 113-115 contacts thiamine diphosphate; that stretch reads SHA. Asp-145 is a binding site for Mg(2+). Thiamine diphosphate contacts are provided by residues 146–147, Asn-175, Tyr-293, and Glu-375; that span reads GA. Asn-175 contributes to the Mg(2+) binding site.

The protein belongs to the transketolase family. DXPS subfamily. As to quaternary structure, homodimer. Mg(2+) serves as cofactor. It depends on thiamine diphosphate as a cofactor.

It catalyses the reaction D-glyceraldehyde 3-phosphate + pyruvate + H(+) = 1-deoxy-D-xylulose 5-phosphate + CO2. It functions in the pathway metabolic intermediate biosynthesis; 1-deoxy-D-xylulose 5-phosphate biosynthesis; 1-deoxy-D-xylulose 5-phosphate from D-glyceraldehyde 3-phosphate and pyruvate: step 1/1. Its function is as follows. Catalyzes the acyloin condensation reaction between C atoms 2 and 3 of pyruvate and glyceraldehyde 3-phosphate to yield 1-deoxy-D-xylulose-5-phosphate (DXP). This Arthrobacter sp. (strain FB24) protein is 1-deoxy-D-xylulose-5-phosphate synthase.